Here is an 834-residue protein sequence, read N- to C-terminus: Protein translocase subunit SecA (834 aa).

Residues Gln-85, 103-107 (GEGKT), and Asp-491 contribute to the ATP site. The disordered stretch occupies residues 790-809 (RETSTNINDGEGGSHEPIKR). Zn(2+) contacts are provided by Cys-820, Cys-822, Cys-831, and Cys-832.

It belongs to the SecA family. Monomer and homodimer. Part of the essential Sec protein translocation apparatus which comprises SecA, SecYEG and auxiliary proteins SecDF. Other proteins may also be involved. The cofactor is Zn(2+).

It is found in the cell membrane. The protein resides in the cytoplasm. The enzyme catalyses ATP + H2O + cellular proteinSide 1 = ADP + phosphate + cellular proteinSide 2.. In terms of biological role, part of the Sec protein translocase complex. Interacts with the SecYEG preprotein conducting channel. Has a central role in coupling the hydrolysis of ATP to the transfer of proteins into and across the cell membrane, serving as an ATP-driven molecular motor driving the stepwise translocation of polypeptide chains across the membrane. The chain is Protein translocase subunit SecA from Clostridium novyi (strain NT).